The following is a 1032-amino-acid chain: GPI ethanolamine phosphate transferase 1 (1032 aa).

Over 1 to 6 the chain is Cytoplasmic; it reads MARLGR. Residues 7-27 form a helical membrane-spanning segment; it reads FGFLALAVVFHLIYAYSIFDI. At 28 to 468 the chain is on the lumenal side; the sequence is YFVSPIVSGM…LQTYDWLFLR (441 aa). 2 N-linked (GlcNAc...) asparagine glycosylation sites follow: asparagine 150 and asparagine 435. The helical transmembrane segment at 469-489 threads the bilayer; the sequence is TIITFGYLGWIAYALTTVIDL. Topologically, residues 490–500 are cytoplasmic; it reads HVLHRTSDSKR. Residues 501–521 form a helical membrane-spanning segment; that stretch reads TVGSTIFFTSILAALFSVLLY. At 522-523 the chain is on the lumenal side; that stretch reads QK. A helical transmembrane segment spans residues 524–544; that stretch reads SSWQYYVYGAFPIFFWEEVFA. Topologically, residues 545–564 are cytoplasmic; the sequence is RRKALIAGREILLGHVRSFG. The chain crosses the membrane as a helical span at residues 565-585; the sequence is GYIASGFQLVAFVAVLEALLM. Residues 586–596 lie on the Lumenal side of the membrane; the sequence is RHQVQSYFHRE. A helical transmembrane segment spans residues 597–617; it reads IYTVCFVLGSFWPILYGVDFV. The Cytoplasmic segment spans residues 618 to 622; sequence RQNTV. A helical transmembrane segment spans residues 623-643; sequence LSATWAVGCSLMSTFTLLPVI. The Lumenal portion of the chain corresponds to 644–647; it reads KVEN. Residues 648–668 traverse the membrane as a helical segment; it reads INTITYGALLMFFTGLFYLLF. The Cytoplasmic segment spans residues 669–688; the sequence is EDTILKHSKSSGHAPGAISS. The chain crosses the membrane as a helical span at residues 689 to 709; that stretch reads LGSRVIMGMQVGMVLLALIVT. Topologically, residues 710–722 are lumenal; the sequence is RSSVSSLQAKQGL. The chain crosses the membrane as a helical span at residues 723 to 743; the sequence is PFGNQVVGWFVLVASLVLPFF. Residues 744–766 are Cytoplasmic-facing; that stretch reads HRLYPNSHYLHRLMVLFLTFSPT. A helical transmembrane segment spans residues 767-787; that stretch reads FIILTISYEGLFYFVFCMTLV. Over 788–841 the chain is Lumenal; it reads TWVRLEHAIYVYTARSSAHYGGNNTVPKKPGLNATAVIDGQEYRYRRLGLADTR. Residues asparagine 810 and asparagine 820 are each glycosylated (N-linked (GlcNAc...) asparagine). Residues 842-862 form a helical membrane-spanning segment; it reads VALFFFFLLQSAFFSTGNIAS. Residues 863–884 are Cytoplasmic-facing; that stretch reads VSSFSLESVFRLIPVFSPFSQS. The helical transmembrane segment at 885–905 threads the bilayer; that stretch reads ALLILKLLIPFAIISANLGIL. The Lumenal portion of the chain corresponds to 906–914; that stretch reads NRRLEVAPS. The helical transmembrane segment at 915–935 threads the bilayer; the sequence is ALFMVVMSISDVMTLNFFYMV. Residues 936-951 lie on the Cytoplasmic side of the membrane; the sequence is RDEGSWLDIGTTISHF. The helical transmembrane segment at 952-972 threads the bilayer; it reads LIASFLCTFVAGLEFLSEVFI. Topologically, residues 973 to 1032 are lumenal; that stretch reads SGVDFGPTTKAIGASITKTVGGTAGSDVVDSQSGPEDAANSKKAEGLEGSETIRQNGGSV. Positions 994-1032 are disordered; sequence GTAGSDVVDSQSGPEDAANSKKAEGLEGSETIRQNGGSV.

The protein belongs to the PIGG/PIGN/PIGO family. PIGN subfamily.

The protein resides in the endoplasmic reticulum membrane. The protein operates within glycolipid biosynthesis; glycosylphosphatidylinositol-anchor biosynthesis. Its function is as follows. Ethanolamine phosphate transferase involved in glycosylphosphatidylinositol-anchor biosynthesis. Transfers ethanolamine phosphate to the first alpha-1,4-linked mannose of the glycosylphosphatidylinositol precursor of GPI-anchor. In Aspergillus fumigatus (strain ATCC MYA-4609 / CBS 101355 / FGSC A1100 / Af293) (Neosartorya fumigata), this protein is GPI ethanolamine phosphate transferase 1 (mcd4).